A 1034-amino-acid chain; its full sequence is Protein argonaute 2 (1034 aa).

The disordered stretch occupies residues 1 to 201; it reads MEHERGGGGR…PMRRPDGGGS (201 aa). The span at 18-125 shows a compositional bias: gly residues; that stretch reads GGRGGGGGDG…ESGGGGGRGG (108 aa). The segment covering 172 to 187 has biased composition (low complexity); sequence VVRVQPPAPPVAVSRS. One can recognise a PAZ domain in the interval 391–504; that stretch reads PVLDLVQKSV…VPIELCDLLE (114 aa). One can recognise a Piwi domain in the interval 688 to 989; it reads LLFCPMSDQH…AAYRGRLYYE (302 aa).

This sequence belongs to the argonaute family. Ago subfamily.

In terms of biological role, probably involved in the RNA silencing pathway. May bind to short RNAs such as microRNAs (miRNAs) or short interfering RNAs (siRNAs), and represses the translation of mRNAs which are complementary to them. This Oryza sativa subsp. japonica (Rice) protein is Protein argonaute 2 (AGO2).